Consider the following 478-residue polypeptide: Aspartyl/glutamyl-tRNA(Asn/Gln) amidotransferase subunit B (478 aa).

The protein belongs to the GatB/GatE family. GatB subfamily. In terms of assembly, heterotrimer of A, B and C subunits.

It catalyses the reaction L-glutamyl-tRNA(Gln) + L-glutamine + ATP + H2O = L-glutaminyl-tRNA(Gln) + L-glutamate + ADP + phosphate + H(+). The enzyme catalyses L-aspartyl-tRNA(Asn) + L-glutamine + ATP + H2O = L-asparaginyl-tRNA(Asn) + L-glutamate + ADP + phosphate + 2 H(+). Its function is as follows. Allows the formation of correctly charged Asn-tRNA(Asn) or Gln-tRNA(Gln) through the transamidation of misacylated Asp-tRNA(Asn) or Glu-tRNA(Gln) in organisms which lack either or both of asparaginyl-tRNA or glutaminyl-tRNA synthetases. The reaction takes place in the presence of glutamine and ATP through an activated phospho-Asp-tRNA(Asn) or phospho-Glu-tRNA(Gln). This Dichelobacter nodosus (strain VCS1703A) protein is Aspartyl/glutamyl-tRNA(Asn/Gln) amidotransferase subunit B.